A 163-amino-acid chain; its full sequence is Phosphopantetheine adenylyltransferase (163 aa).

Threonine 11 lines the substrate pocket. Residues 11–12 (TF) and histidine 19 each bind ATP. Residues lysine 43, leucine 75, and arginine 89 each contribute to the substrate site. Residues 90–92 (GLR), glutamate 100, and 125–131 (YMFISAT) contribute to the ATP site.

The protein belongs to the bacterial CoaD family. In terms of assembly, homohexamer. Mg(2+) serves as cofactor.

It is found in the cytoplasm. It carries out the reaction (R)-4'-phosphopantetheine + ATP + H(+) = 3'-dephospho-CoA + diphosphate. The protein operates within cofactor biosynthesis; coenzyme A biosynthesis; CoA from (R)-pantothenate: step 4/5. In terms of biological role, reversibly transfers an adenylyl group from ATP to 4'-phosphopantetheine, yielding dephospho-CoA (dPCoA) and pyrophosphate. This chain is Phosphopantetheine adenylyltransferase, found in Aromatoleum aromaticum (strain DSM 19018 / LMG 30748 / EbN1) (Azoarcus sp. (strain EbN1)).